A 1412-amino-acid chain; its full sequence is DNA-directed RNA polymerase subunit beta (1412 aa).

The protein belongs to the RNA polymerase beta chain family. As to quaternary structure, the RNAP catalytic core consists of 2 alpha, 1 beta, 1 beta' and 1 omega subunit. When a sigma factor is associated with the core the holoenzyme is formed, which can initiate transcription.

The catalysed reaction is RNA(n) + a ribonucleoside 5'-triphosphate = RNA(n+1) + diphosphate. Functionally, DNA-dependent RNA polymerase catalyzes the transcription of DNA into RNA using the four ribonucleoside triphosphates as substrates. The sequence is that of DNA-directed RNA polymerase subunit beta from Bdellovibrio bacteriovorus (strain ATCC 15356 / DSM 50701 / NCIMB 9529 / HD100).